The sequence spans 457 residues: ATP synthase subunit beta (457 aa).

Residue 147-154 coordinates ATP; that stretch reads GGAGVGKT.

The protein belongs to the ATPase alpha/beta chains family. As to quaternary structure, F-type ATPases have 2 components, CF(1) - the catalytic core - and CF(0) - the membrane proton channel. CF(1) has five subunits: alpha(3), beta(3), gamma(1), delta(1), epsilon(1). CF(0) has three main subunits: a(1), b(2) and c(9-12). The alpha and beta chains form an alternating ring which encloses part of the gamma chain. CF(1) is attached to CF(0) by a central stalk formed by the gamma and epsilon chains, while a peripheral stalk is formed by the delta and b chains.

Its subcellular location is the cell inner membrane. The catalysed reaction is ATP + H2O + 4 H(+)(in) = ADP + phosphate + 5 H(+)(out). Produces ATP from ADP in the presence of a proton gradient across the membrane. The catalytic sites are hosted primarily by the beta subunits. This is ATP synthase subunit beta from Histophilus somni (strain 129Pt) (Haemophilus somnus).